Reading from the N-terminus, the 519-residue chain is 2-isopropylmalate synthase (519 aa).

The 263-residue stretch at 12 to 274 folds into the Pyruvate carboxyltransferase domain; it reads VVIFDTTLRD…WCNVESTMLT (263 aa). 4 residues coordinate Mn(2+): aspartate 21, histidine 209, histidine 211, and asparagine 245. Positions 398 to 519 are regulatory domain; the sequence is KLSSLTVIAG…QRDVPAAAAS (122 aa).

This sequence belongs to the alpha-IPM synthase/homocitrate synthase family. LeuA type 1 subfamily. As to quaternary structure, homodimer. Mn(2+) serves as cofactor.

It is found in the cytoplasm. The catalysed reaction is 3-methyl-2-oxobutanoate + acetyl-CoA + H2O = (2S)-2-isopropylmalate + CoA + H(+). It functions in the pathway amino-acid biosynthesis; L-leucine biosynthesis; L-leucine from 3-methyl-2-oxobutanoate: step 1/4. Functionally, catalyzes the condensation of the acetyl group of acetyl-CoA with 3-methyl-2-oxobutanoate (2-ketoisovalerate) to form 3-carboxy-3-hydroxy-4-methylpentanoate (2-isopropylmalate). The protein is 2-isopropylmalate synthase of Nitrobacter winogradskyi (strain ATCC 25391 / DSM 10237 / CIP 104748 / NCIMB 11846 / Nb-255).